The following is an 854-amino-acid chain: Envelope glycoprotein gp160 (854 aa).

The first 31 residues, 1–31, serve as a signal peptide directing secretion; the sequence is MKVMEKKKRDWNSLSIITIITIILLTPCLTS. Topologically, residues 32–675 are extracellular; it reads ELWVTVYYGV…ITKWLWYIKI (644 aa). 6 cysteine pairs are disulfide-bonded: C53–C73, C118–C203, C125–C194, C130–C155, C216–C245, and C226–C237. Positions 130 to 154 are V1; sequence CSKANFSQAKNLTNQTSSPPLEMKN. Residues N134, N140, N143, N154, N158, N186, and N195 are each glycosylated (N-linked (GlcNAc...) asparagine; by host). Residues 155–194 form a V2 region; it reads CSFNVTTELRDKKKQVYSLFYVEDVVNLGNENNTYRIINC. N239, N260, N267, N274, N299, N331, N336, N351, and N356 each carry an N-linked (GlcNAc...) asparagine; by host glycan. The segment at 294 to 327 is V3; that stretch reads CHRPGNNTRGEVQIGPGMTFYNIENVVGDTRSAY. C294 and C328 are oxidised to a cystine. The CD4-binding loop stretch occupies residues 362 to 372; the sequence is ASGGDPEVTHH. 2 cysteine pairs are disulfide-bonded: C376–C429 and C383–C402. Residues 383–402 are V4; sequence CNTSQIFTDNITNGIIILPC. N-linked (GlcNAc...) asparagine; by host glycans are attached at residues N384, N392, N426, N432, N446, and N450. V5 stretches follow at residues 445 to 456 and 447 to 456; these read TNNSGNLTFRPT and NSGNLTFRPT. A fusion peptide region spans residues 501–522; that stretch reads AAFGLGALFLGFLGAAGSTMGA. The segment at 564–582 is immunosuppression; the sequence is KQLQARLLAVERYLQDQQI. Residues C588 and C594 are joined by a disulfide bond. N-linked (GlcNAc...) asparagine; by host glycosylation is found at N601, N608, N616, and N628. Residues 624-658 are a coiled coil; that stretch reads KLVSNYTGKIFGLLEEAQSQQEKNERDLLELDQWA. The MPER; binding to GalCer stretch occupies residues 653 to 674; that stretch reads ELDQWASLWNWFDITKWLWYIK. A helical transmembrane segment spans residues 676-696; it reads FLMAVGGIIGLRIIMTVFSVV. Residues 697–854 are Cytoplasmic-facing; it reads RRVRQGYSPL…IRQGLERALL (158 aa). Positions 703 to 706 match the YXXL motif; contains endocytosis signal motif; the sequence is YSPL. The Di-leucine internalization motif signature appears at 853–854; sequence LL.

The protein belongs to the HIV-1 env protein family. As to quaternary structure, the mature envelope protein (Env) consists of a homotrimer of non-covalently associated gp120-gp41 heterodimers. The resulting complex protrudes from the virus surface as a spike. There seems to be as few as 10 spikes on the average virion. Interacts with host CD4, CCR5 and CXCR4. Gp120 also interacts with the C-type lectins CD209/DC-SIGN and CLEC4M/DC-SIGNR (collectively referred to as DC-SIGN(R)). Gp120 and gp41 interact with GalCer. Gp120 interacts with host ITGA4/ITGB7 complex; on CD4+ T-cells, this interaction results in rapid activation of integrin ITGAL/LFA-1, which facilitates efficient cell-to-cell spreading of HIV-1. Gp120 interacts with cell-associated heparan sulfate; this interaction increases virus infectivity on permissive cells and may be involved in infection of CD4- cells. The mature envelope protein (Env) consists of a homotrimer of non-covalently associated gp120-gp41 heterodimers. The resulting complex protrudes from the virus surface as a spike. There seems to be as few as 10 spikes on the average virion. In terms of processing, highly glycosylated by host. The high number of glycan on the protein is reffered to as 'glycan shield' because it contributes to hide protein sequence from adaptive immune system. Post-translationally, palmitoylation of the transmembrane protein and of Env polyprotein (prior to its proteolytic cleavage) is essential for their association with host cell membrane lipid rafts. Palmitoylation is therefore required for envelope trafficking to classical lipid rafts, but not for viral replication. Specific enzymatic cleavages in vivo yield mature proteins. Envelope glycoproteins are synthesized as an inactive precursor that is heavily N-glycosylated and processed likely by host cell furin in the Golgi to yield the mature SU and TM proteins. The cleavage site between SU and TM requires the minimal sequence [KR]-X-[KR]-R. About 2 of the 9 disulfide bonds of gp41 are reduced by P4HB/PDI, following binding to CD4 receptor.

Its subcellular location is the virion membrane. The protein localises to the host cell membrane. The protein resides in the host endosome membrane. Its function is as follows. Attaches the virus to the host lymphoid cell by binding to the primary receptor CD4. This interaction induces a structural rearrangement creating a high affinity binding site for a chemokine coreceptor like CXCR4 and/or CCR5. Acts as a ligand for CD209/DC-SIGN and CLEC4M/DC-SIGNR, which are respectively found on dendritic cells (DCs), and on endothelial cells of liver sinusoids and lymph node sinuses. These interactions allow capture of viral particles at mucosal surfaces by these cells and subsequent transmission to permissive cells. HIV subverts the migration properties of dendritic cells to gain access to CD4+ T-cells in lymph nodes. Virus transmission to permissive T-cells occurs either in trans (without DCs infection, through viral capture and transmission), or in cis (following DCs productive infection, through the usual CD4-gp120 interaction), thereby inducing a robust infection. In trans infection, bound virions remain infectious over days and it is proposed that they are not degraded, but protected in non-lysosomal acidic organelles within the DCs close to the cell membrane thus contributing to the viral infectious potential during DCs' migration from the periphery to the lymphoid tissues. On arrival at lymphoid tissues, intact virions recycle back to DCs' cell surface allowing virus transmission to CD4+ T-cells. Functionally, acts as a class I viral fusion protein. Under the current model, the protein has at least 3 conformational states: pre-fusion native state, pre-hairpin intermediate state, and post-fusion hairpin state. During fusion of viral and target intracellular membranes, the coiled coil regions (heptad repeats) assume a trimer-of-hairpins structure, positioning the fusion peptide in close proximity to the C-terminal region of the ectodomain. The formation of this structure appears to drive apposition and subsequent fusion of viral and target cell membranes. Complete fusion occurs in host cell endosomes and is dynamin-dependent, however some lipid transfer might occur at the plasma membrane. The virus undergoes clathrin-dependent internalization long before endosomal fusion, thus minimizing the surface exposure of conserved viral epitopes during fusion and reducing the efficacy of inhibitors targeting these epitopes. Membranes fusion leads to delivery of the nucleocapsid into the cytoplasm. In terms of biological role, oligomerizes in the host endoplasmic reticulum into predominantly trimers. In a second time, gp160 transits in the host Golgi, where glycosylation is completed. The precursor is then proteolytically cleaved in the trans-Golgi and thereby activated by cellular furin or furin-like proteases to produce gp120 and gp41. The polypeptide is Envelope glycoprotein gp160 (Pan (chimpanzees)).